A 110-amino-acid chain; its full sequence is UPF0122 protein SaurJH9_1295 (110 aa).

Belongs to the UPF0122 family.

Might take part in the signal recognition particle (SRP) pathway. This is inferred from the conservation of its genetic proximity to ftsY/ffh. May be a regulatory protein. The chain is UPF0122 protein SaurJH9_1295 from Staphylococcus aureus (strain JH9).